Here is a 342-residue protein sequence, read N- to C-terminus: Protein-glutamate methylesterase/protein-glutamine glutaminase 1 (342 aa).

The region spanning 2-119 (RVAIVNDMPL…GDPKAAAQRL (118 aa)) is the Response regulatory domain. Asp53 bears the 4-aspartylphosphate mark. In terms of domain architecture, CheB-type methylesterase spans 146 to 329 (SDTDAALVVI…LPLGDIAPRL (184 aa)). Residues Ser158, His185, and Asp278 contribute to the active site.

Belongs to the CheB family. Post-translationally, phosphorylated by CheA. Phosphorylation of the N-terminal regulatory domain activates the methylesterase activity.

The protein localises to the cytoplasm. It carries out the reaction [protein]-L-glutamate 5-O-methyl ester + H2O = L-glutamyl-[protein] + methanol + H(+). The catalysed reaction is L-glutaminyl-[protein] + H2O = L-glutamyl-[protein] + NH4(+). In terms of biological role, involved in chemotaxis. Part of a chemotaxis signal transduction system that modulates chemotaxis in response to various stimuli. Catalyzes the demethylation of specific methylglutamate residues introduced into the chemoreceptors (methyl-accepting chemotaxis proteins or MCP) by CheR. Also mediates the irreversible deamidation of specific glutamine residues to glutamic acid. In Bordetella avium (strain 197N), this protein is Protein-glutamate methylesterase/protein-glutamine glutaminase 1.